Consider the following 330-residue polypeptide: Cathepsin S (330 aa).

An N-terminal signal peptide occupies residues 1 to 17; that stretch reads MAVLGAPGVLCDNGATA. Residues 18 to 112 constitute a propeptide, activation peptide; the sequence is ERPTLDHHWD…GTLKSSSNQT (95 aa). N100 and N110 each carry an N-linked (GlcNAc...) asparagine glycan. Cystine bridges form between C124-C222, C134-C179, C168-C211, and C271-C319. C137 is an active-site residue. Active-site residues include H277 and N297.

It belongs to the peptidase C1 family. Monomer. In terms of tissue distribution, highest levels occur in the ileum followed by spleen, brain, thyroid, ovary and uterus. Low levels are found in the liver, kidney, jejunum and lung with lowest levels in the heart.

The protein localises to the lysosome. The protein resides in the secreted. It localises to the cytoplasmic vesicle. It is found in the phagosome. It catalyses the reaction Similar to cathepsin L, but with much less activity on Z-Phe-Arg-|-NHMec, and more activity on the Z-Val-Val-Arg-|-Xaa compound.. Thiol protease. Key protease responsible for the removal of the invariant chain from MHC class II molecules and MHC class II antigen presentation. The bond-specificity of this proteinase is in part similar to the specificities of cathepsin L. The chain is Cathepsin S (Ctss) from Rattus norvegicus (Rat).